Consider the following 353-residue polypeptide: Ribosomal RNA large subunit methyltransferase M (353 aa).

S-adenosyl-L-methionine contacts are provided by residues serine 183, 216–219 (APGG), aspartate 235, aspartate 255, and aspartate 271. The active-site Proton acceptor is the lysine 300.

It belongs to the class I-like SAM-binding methyltransferase superfamily. RNA methyltransferase RlmE family. RlmM subfamily. In terms of assembly, monomer.

It localises to the cytoplasm. It catalyses the reaction cytidine(2498) in 23S rRNA + S-adenosyl-L-methionine = 2'-O-methylcytidine(2498) in 23S rRNA + S-adenosyl-L-homocysteine + H(+). Functionally, catalyzes the 2'-O-methylation at nucleotide C2498 in 23S rRNA. The polypeptide is Ribosomal RNA large subunit methyltransferase M (Azotobacter vinelandii (strain DJ / ATCC BAA-1303)).